The primary structure comprises 307 residues: Cuticle collagen 36 (307 aa).

2 disordered regions span residues 76 to 102 (TRSRRDAGYKEGSGSGGSGSGGYGGPT) and 116 to 307 (QQGP…PPGY). The segment covering 86 to 102 (EGSGSGGSGSGGYGGPT) has biased composition (gly residues). 6 triple-helical region regions span residues 89–105 (GSGGSGSGGYGGPTGAG), 118–150 (GPAGPPGPAGDTGPNGNDGHHGAPGVPGKEGSI), 167–187 (GPQGAVGQQGPKGPPGPKGKS), 194–226 (GKNGEPGMIGPPGPPGGVGEPGPPGPAGQPGRV), 231–257 (GAAGPAGPRGVKGPPGPKGLPGIAGLT), and 260–295 (GGQGPPGDAGGPGPVGGQGPPGPQGPQGPPGDEGSC). Over residues 157-168 (PSEPCIICPPGP) the composition is skewed to pro residues. The segment covering 186-196 (KSQERAADGKN) has biased composition (basic and acidic residues). A compositionally biased stretch (pro residues) spans 202-220 (IGPPGPPGGVGEPGPPGPA). Over residues 231–242 (GAAGPAGPRGVK) the composition is skewed to low complexity. A compositionally biased stretch (gly residues) spans 258–278 (EIGGQGPPGDAGGPGPVGGQG). Pro residues predominate over residues 279–288 (PPGPQGPQGP).

This sequence belongs to the cuticular collagen family. In terms of assembly, collagen polypeptide chains are complexed within the cuticle by disulfide bonds and other types of covalent cross-links.

Nematode cuticles are composed largely of collagen-like proteins. The cuticle functions both as an exoskeleton and as a barrier to protect the worm from its environment. The polypeptide is Cuticle collagen 36 (col-36) (Caenorhabditis elegans).